The following is a 224-amino-acid chain: Probable 2-phosphosulfolactate phosphatase (224 aa).

It belongs to the ComB family. Mg(2+) is required as a cofactor.

It carries out the reaction (2R)-O-phospho-3-sulfolactate + H2O = (2R)-3-sulfolactate + phosphate. This is Probable 2-phosphosulfolactate phosphatase from Pseudothermotoga lettingae (strain ATCC BAA-301 / DSM 14385 / NBRC 107922 / TMO) (Thermotoga lettingae).